Reading from the N-terminus, the 529-residue chain is uncharacterized protein (529 aa).

ABC transporter domains are found at residues 6-257 and 287-526; these read LAIE…QKLL and IRKG…RQLL. ATP-binding positions include 42 to 49 and 319 to 326; these read GESGSGKS.

It belongs to the ABC transporter superfamily.

This is an uncharacterized protein from Escherichia coli (strain K12).